Here is a 210-residue protein sequence, read N- to C-terminus: 7-carboxy-7-deazaguanine synthase (210 aa).

Substrate-binding positions include 12–14 (LQG) and arginine 27. Residues 18 to 210 (NAGRPAVFCR…MQTHKYLNIP (193 aa)) form the Radical SAM core domain. The [4Fe-4S] cluster site is built by cysteine 31, cysteine 46, and cysteine 49. 48-50 (FCD) contacts S-adenosyl-L-methionine. Position 51 (threonine 51) interacts with Mg(2+). Substrate is bound at residue threonine 90. Residues glycine 92, 133-135 (SPK), and 173-176 (QPMD) each bind S-adenosyl-L-methionine. Residue proline 210 coordinates substrate.

This sequence belongs to the radical SAM superfamily. 7-carboxy-7-deazaguanine synthase family. Homodimer. It depends on [4Fe-4S] cluster as a cofactor. Requires S-adenosyl-L-methionine as cofactor. Mg(2+) is required as a cofactor.

The enzyme catalyses 6-carboxy-5,6,7,8-tetrahydropterin + H(+) = 7-carboxy-7-deazaguanine + NH4(+). Its pathway is purine metabolism; 7-cyano-7-deazaguanine biosynthesis. Its function is as follows. Catalyzes the complex heterocyclic radical-mediated conversion of 6-carboxy-5,6,7,8-tetrahydropterin (CPH4) to 7-carboxy-7-deazaguanine (CDG), a step common to the biosynthetic pathways of all 7-deazapurine-containing compounds. The sequence is that of 7-carboxy-7-deazaguanine synthase from Burkholderia multivorans (strain ATCC 17616 / 249).